The sequence spans 962 residues: Integrator complex subunit 7 (962 aa).

Phosphoserine is present on residues Ser338 and Ser809.

The protein belongs to the Integrator subunit 7 family. Component of the Integrator complex, composed of core subunits INTS1, INTS2, INTS3, INTS4, INTS5, INTS6, INTS7, INTS8, INTS9/RC74, INTS10, INTS11/CPSF3L, INTS12, INTS13, INTS14 and INTS15. The core complex associates with protein phosphatase 2A subunits PPP2CA and PPP2R1A, to form the Integrator-PP2A (INTAC) complex. Interacts with NABP2.

The protein resides in the nucleus. It is found in the chromosome. It localises to the cytoplasm. In terms of biological role, component of the integrator complex, a multiprotein complex that terminates RNA polymerase II (Pol II) transcription in the promoter-proximal region of genes. The integrator complex provides a quality checkpoint during transcription elongation by driving premature transcription termination of transcripts that are unfavorably configured for transcriptional elongation: the complex terminates transcription by (1) catalyzing dephosphorylation of the C-terminal domain (CTD) of Pol II subunit POLR2A/RPB1 and SUPT5H/SPT5, (2) degrading the exiting nascent RNA transcript via endonuclease activity and (3) promoting the release of Pol II from bound DNA. The integrator complex is also involved in terminating the synthesis of non-coding Pol II transcripts, such as enhancer RNAs (eRNAs), small nuclear RNAs (snRNAs), telomerase RNAs and long non-coding RNAs (lncRNAs). May be not involved in the recruitment of cytoplasmic dynein to the nuclear envelope by different components of the INT complex. Plays a role in DNA damage response (DDR) signaling during the S phase. In Bos taurus (Bovine), this protein is Integrator complex subunit 7 (INTS7).